We begin with the raw amino-acid sequence, 146 residues long: Heat-stable 19 kDa antigen (146 aa).

The signal sequence occupies residues 1–20 (MKFSLLSAIAAAVFVPFTSA).

This sequence belongs to the cerato-platanin family. In terms of processing, glycosylated.

Its subcellular location is the secreted. This Coccidioides immitis (strain RS) (Valley fever fungus) protein is Heat-stable 19 kDa antigen (CSA).